Consider the following 198-residue polypeptide: Putative pseudouridine methyltransferase (198 aa).

The S-adenosyl-L-methionine site is built by methionine 132 and cysteine 186.

The protein belongs to the methyltransferase superfamily. TrmY family.

It is found in the cytoplasm. This is Putative pseudouridine methyltransferase from Shewanella baltica (strain OS185).